We begin with the raw amino-acid sequence, 222 residues long: Ethylene-inducing xylanase 2 (222 aa).

The first 19 residues, methionine 1–alanine 19, serve as a signal peptide directing secretion. The GH11 domain maps to glutamine 36–serine 222. 2 N-linked (GlcNAc...) asparagine glycosylation sites follow: asparagine 38 and asparagine 94. Catalysis depends on glutamate 120, which acts as the Nucleophile. Glutamate 209 functions as the Proton donor in the catalytic mechanism.

The protein belongs to the glycosyl hydrolase 11 (cellulase G) family.

The catalysed reaction is Endohydrolysis of (1-&gt;4)-beta-D-xylosidic linkages in xylans.. It participates in glycan degradation; xylan degradation. Endo-1,4-beta-xylanase involved in the hydrolysis of xylan, a major structural heterogeneous polysaccharide found in plant biomass representing the second most abundant polysaccharide in the biosphere, after cellulose. May act as an elicitor of plant defense responses in certain plants but does not exhibit any cell death when transiently expressed in N.benthamiana. The protein is Ethylene-inducing xylanase 2 of Botryotinia fuckeliana (strain B05.10) (Noble rot fungus).